The following is a 179-amino-acid chain: UPF0227 protein Shew185_2404 (179 aa).

The protein belongs to the UPF0227 family.

This is UPF0227 protein Shew185_2404 from Shewanella baltica (strain OS185).